A 165-amino-acid polypeptide reads, in one-letter code: PTS system glucose-specific EIIA component (165 aa).

One can recognise a PTS EIIA type-1 domain in the interval 33-137 (DPVFAGRMMG…STITPIVITN (105 aa)). Zn(2+) is bound by residues H70 and H85. H85 acts as the Tele-phosphohistidine intermediate; for EIIA activity in catalysis. H85 carries the phosphohistidine; by HPr modification.

As to quaternary structure, heterodimer with glycerol kinase (glpk). It depends on Zn(2+) as a cofactor.

Its subcellular location is the cytoplasm. In terms of biological role, the phosphoenolpyruvate-dependent sugar phosphotransferase system (sugar PTS), a major carbohydrate active transport system, catalyzes the phosphorylation of incoming sugar substrates concomitantly with their translocation across the cell membrane. The enzyme II complex composed of PtsG and Crr is involved in glucose transport. The sequence is that of PTS system glucose-specific EIIA component (crr) from Bacillus cereus (strain ATCC 14579 / DSM 31 / CCUG 7414 / JCM 2152 / NBRC 15305 / NCIMB 9373 / NCTC 2599 / NRRL B-3711).